The chain runs to 284 residues: Tropomyosin (284 aa).

A coiled-coil region spans residues 1–273 (MDAIKKKMLA…KEKYKAISDE (273 aa)).

This sequence belongs to the tropomyosin family. In terms of assembly, homodimer.

Its function is as follows. Tropomyosin, in association with the troponin complex, plays a central role in the calcium dependent regulation of muscle contraction. This chain is Tropomyosin, found in Haliotis diversicolor (Abalone).